Here is a 378-residue protein sequence, read N- to C-terminus: Putative glutamate--cysteine ligase 2 (378 aa).

It belongs to the glutamate--cysteine ligase type 2 family. YbdK subfamily.

It carries out the reaction L-cysteine + L-glutamate + ATP = gamma-L-glutamyl-L-cysteine + ADP + phosphate + H(+). ATP-dependent carboxylate-amine ligase which exhibits weak glutamate--cysteine ligase activity. The chain is Putative glutamate--cysteine ligase 2 from Pseudomonas paraeruginosa (strain DSM 24068 / PA7) (Pseudomonas aeruginosa (strain PA7)).